The chain runs to 420 residues: Probable 3-isopropylmalate dehydratase large subunit (420 aa).

[4Fe-4S] cluster is bound by residues Cys301, Cys361, and Cys364.

The protein belongs to the aconitase/IPM isomerase family. LeuC type 2 subfamily. Heterodimer of LeuC and LeuD. It depends on [4Fe-4S] cluster as a cofactor.

The catalysed reaction is (2R,3S)-3-isopropylmalate = (2S)-2-isopropylmalate. Its pathway is amino-acid biosynthesis; L-leucine biosynthesis; L-leucine from 3-methyl-2-oxobutanoate: step 2/4. Catalyzes the isomerization between 2-isopropylmalate and 3-isopropylmalate, via the formation of 2-isopropylmaleate. The protein is Probable 3-isopropylmalate dehydratase large subunit of Methanosarcina mazei (strain ATCC BAA-159 / DSM 3647 / Goe1 / Go1 / JCM 11833 / OCM 88) (Methanosarcina frisia).